A 270-amino-acid chain; its full sequence is Replication protein A 32 kDa subunit (270 aa).

At methionine 1 the chain carries N-acetylmethionine. Phosphoserine; by PRKDC occurs at positions 4 and 8. Threonine 21 is subject to Phosphothreonine; by PRKDC. The tract at residues 21–41 (TQSPGGFGSPAPSQAEKKSRA) is disordered. A Phosphoserine; by CDK2 modification is found at serine 23. Serine 29 is subject to Phosphoserine; by CDK1. Serine 33 carries the post-translational modification Phosphoserine; by PRKDC. Residues lysine 37 and lysine 38 each participate in a glycyl lysine isopeptide (Lys-Gly) (interchain with G-Cter in ubiquitin) cross-link. The OB DNA-binding region spans 74–148 (VTIVGIIRHA…KSLVAFKIMP (75 aa)). Positions 187–270 (GMSEAGNFGG…DDHFKSTDAE (84 aa)) are interaction with RAD52, TIPIN, UNG and XPA.

This sequence belongs to the replication factor A protein 2 family. As to quaternary structure, component of the replication protein A complex (RPA/RP-A), a heterotrimeric complex composed of RPA1, RPA2 and RPA3. Interacts with PRPF19; the PRP19-CDC5L complex is recruited to the sites of DNA repair where it ubiquitinates the replication protein A complex (RPA). Interacts with SERTAD3. Interacts with TIPIN. Interacts with TIMELESS. Interacts with PPP4R2; the interaction is direct, DNA damage-dependent and mediates the recruitment of the PP4 catalytic subunit PPP4C. Interacts (hyperphosphorylated) with RAD51. Interacts with SMARCAL1; the interaction is direct and mediates the recruitment to the RPA complex of SMARCAL1. Interacts with RAD52 and XPA; those interactions are direct and associate RAD52 and XPA to the RPA complex. Interacts with FBH1. Interacts with ETAA1; the interaction is direct and promotes ETAA1 recruitment at stalled replication forks. Interacts with RFWD3. Interacts with DDI2. Interacts (in unphosphorylated form via N-terminus) with EIF4EBP3; the interaction enhances EIF4EBP3-mediated inhibition of EIF4E-mediated mRNA nuclear export. Interacts with BRIP1/FANCJ via the RPA1 subunit; following DNA damage they colocalize in foci in the nucleus. Interacts with nuclear UNG (isoform 2); this interaction mediates UNG recruitment to RPA-coated single-stranded DNA at stalled replication forks. Differentially phosphorylated throughout the cell cycle, becoming phosphorylated at the G1-S transition and dephosphorylated in late mitosis. Mainly phosphorylated at Ser-23 and Ser-29, by cyclin A-CDK2 and cyclin B-CDK1, respectively during DNA replication and mitosis. Dephosphorylation may require the serine/threonine-protein phosphatase 4. Phosphorylation at Ser-23 and Ser-29 is a prerequisite for further phosphorylation. Becomes hyperphosphorylated on additional residues including Ser-4, Ser-8, Thr-21 and Ser-33 in response to DNA damage. Hyperphosphorylation is mediated by ATM, ATR and PRKDC. Primarily recruited to DNA repair nuclear foci as a hypophosphorylated form it undergoes subsequent hyperphosphorylation, catalyzed by ATR. Hyperphosphorylation is required for RAD51 recruitment to chromatin and efficient DNA repair. Phosphorylation at Thr-21 depends upon RFWD3 presence. Post-translationally, DNA damage-induced 'Lys-63'-linked polyubiquitination by PRPF19 mediates ATRIP recruitment to the RPA complex at sites of DNA damage and activation of ATR. Ubiquitinated by RFWD3 at stalled replication forks in response to DNA damage: ubiquitination by RFWD3 does not lead to degradation by the proteasome and promotes removal of the RPA complex from stalled replication forks, promoting homologous recombination.

It localises to the nucleus. It is found in the PML body. Functionally, as part of the heterotrimeric replication protein A complex (RPA/RP-A), binds and stabilizes single-stranded DNA intermediates that form during DNA replication or upon DNA stress. It prevents their reannealing and in parallel, recruits and activates different proteins and complexes involved in DNA metabolism. Thereby, it plays an essential role both in DNA replication and the cellular response to DNA damage. In the cellular response to DNA damage, the RPA complex controls DNA repair and DNA damage checkpoint activation. Through recruitment of ATRIP activates the ATR kinase a master regulator of the DNA damage response. It is required for the recruitment of the DNA double-strand break repair factors RAD51 and RAD52 to chromatin in response to DNA damage. Also recruits to sites of DNA damage proteins like XPA and XPG that are involved in nucleotide excision repair and is required for this mechanism of DNA repair. Also plays a role in base excision repair (BER) probably through interaction with UNG. Also recruits SMARCAL1/HARP, which is involved in replication fork restart, to sites of DNA damage. May also play a role in telomere maintenance. RPA stimulates 5'-3' helicase activity of BRIP1/FANCJ. The protein is Replication protein A 32 kDa subunit (RPA2) of Homo sapiens (Human).